A 236-amino-acid polypeptide reads, in one-letter code: Ribosomal RNA small subunit methyltransferase G (236 aa).

Residues glycine 80, 131–132 (AE), and arginine 148 contribute to the S-adenosyl-L-methionine site.

Belongs to the methyltransferase superfamily. RNA methyltransferase RsmG family.

The protein localises to the cytoplasm. Functionally, specifically methylates the N7 position of a guanine in 16S rRNA. This chain is Ribosomal RNA small subunit methyltransferase G, found in Ureaplasma parvum serovar 3 (strain ATCC 27815 / 27 / NCTC 11736).